Consider the following 311-residue polypeptide: Dermonecrotic toxin LlSicTox-alphaIII1i (311 aa).

A signal peptide spans 1–21 (MYAHLALILGCWTVVLQGAET). A propeptide spanning residues 22–26 (DVGER) is cleaved from the precursor. Residue His38 is part of the active site. Residues Glu58 and Asp60 each contribute to the Mg(2+) site. His73 functions as the Nucleophile in the catalytic mechanism. An intrachain disulfide couples Cys77 to Cys83. Asp117 is a binding site for Mg(2+).

This sequence belongs to the arthropod phospholipase D family. Class I subfamily. Requires Mg(2+) as cofactor. In terms of tissue distribution, expressed by the venom gland.

The protein localises to the secreted. It carries out the reaction an N-(acyl)-sphingosylphosphocholine = an N-(acyl)-sphingosyl-1,3-cyclic phosphate + choline. It catalyses the reaction an N-(acyl)-sphingosylphosphoethanolamine = an N-(acyl)-sphingosyl-1,3-cyclic phosphate + ethanolamine. The catalysed reaction is a 1-acyl-sn-glycero-3-phosphocholine = a 1-acyl-sn-glycero-2,3-cyclic phosphate + choline. The enzyme catalyses a 1-acyl-sn-glycero-3-phosphoethanolamine = a 1-acyl-sn-glycero-2,3-cyclic phosphate + ethanolamine. Functionally, dermonecrotic toxins cleave the phosphodiester linkage between the phosphate and headgroup of certain phospholipids (sphingolipid and lysolipid substrates), forming an alcohol (often choline) and a cyclic phosphate. This toxin acts on sphingomyelin (SM) with high activity. It also act on acyl- and alkyl-lysophosphatidylcholine (LPC), but not on sphingosylphosphorylcholine (SPC) and phosphatidylcholine (PC). It may also act on ceramide phosphoethanolamine (CPE), and lysophosphatidylethanolamine (LPE), but not on lysophosphatidylserine (LPS), and lysophosphatidylglycerol (LPG). It acts by transphosphatidylation, releasing exclusively cyclic phosphate products as second products. Induces complement-dependent hemolysis and dermonecrosis. Also induces increased vascular permeability, edema, inflammatory response, and platelet aggregation. The chain is Dermonecrotic toxin LlSicTox-alphaIII1i from Loxosceles laeta (South American recluse spider).